Here is a 299-residue protein sequence, read N- to C-terminus: Bifunctional protein FolD (299 aa).

Residues 168–170 (GRS), Ser193, and Ile234 each bind NADP(+).

It belongs to the tetrahydrofolate dehydrogenase/cyclohydrolase family. In terms of assembly, homodimer.

It carries out the reaction (6R)-5,10-methylene-5,6,7,8-tetrahydrofolate + NADP(+) = (6R)-5,10-methenyltetrahydrofolate + NADPH. The catalysed reaction is (6R)-5,10-methenyltetrahydrofolate + H2O = (6R)-10-formyltetrahydrofolate + H(+). It participates in one-carbon metabolism; tetrahydrofolate interconversion. Catalyzes the oxidation of 5,10-methylenetetrahydrofolate to 5,10-methenyltetrahydrofolate and then the hydrolysis of 5,10-methenyltetrahydrofolate to 10-formyltetrahydrofolate. The sequence is that of Bifunctional protein FolD from Bartonella tribocorum (strain CIP 105476 / IBS 506).